The sequence spans 432 residues: Adenylosuccinate synthetase (432 aa).

GTP contacts are provided by residues 13–19 and 41–43; these read GDEGKGK and GHT. The active-site Proton acceptor is Asp14. Residues Asp14 and Gly41 each coordinate Mg(2+). IMP is bound by residues 14 to 17, 39 to 42, Thr130, Arg144, Gln225, Thr240, and Arg304; these read DEGK and NAGH. His42 acts as the Proton donor in catalysis. 300–306 lines the substrate pocket; the sequence is AVTGRPR. GTP-binding positions include Arg306, 332-334, and 415-417; these read KLD and STG.

This sequence belongs to the adenylosuccinate synthetase family. Homodimer. The cofactor is Mg(2+).

It is found in the cytoplasm. It catalyses the reaction IMP + L-aspartate + GTP = N(6)-(1,2-dicarboxyethyl)-AMP + GDP + phosphate + 2 H(+). It functions in the pathway purine metabolism; AMP biosynthesis via de novo pathway; AMP from IMP: step 1/2. Functionally, plays an important role in the de novo pathway of purine nucleotide biosynthesis. Catalyzes the first committed step in the biosynthesis of AMP from IMP. This is Adenylosuccinate synthetase from Haemophilus influenzae (strain PittEE).